Here is a 119-residue protein sequence, read N- to C-terminus: MFKKVDKKASREKRHLRVRKKVFGTAERPRLSVFKSEKNIYAQVIDDINGVTLVAASSLEKDFAAKGGNKEGAKLVGELVAKKAIEKGIDVVVFDRGGYIYHGRIQELAQAAREAGLKF.

Belongs to the universal ribosomal protein uL18 family. As to quaternary structure, part of the 50S ribosomal subunit; part of the 5S rRNA/L5/L18/L25 subcomplex. Contacts the 5S and 23S rRNAs.

This is one of the proteins that bind and probably mediate the attachment of the 5S RNA into the large ribosomal subunit, where it forms part of the central protuberance. In Clostridium beijerinckii (strain ATCC 51743 / NCIMB 8052) (Clostridium acetobutylicum), this protein is Large ribosomal subunit protein uL18.